The following is a 371-amino-acid chain: Ferrochelatase (371 aa).

Residues H218 and E299 each coordinate Fe cation.

The protein belongs to the ferrochelatase family.

The protein resides in the cytoplasm. It catalyses the reaction heme b + 2 H(+) = protoporphyrin IX + Fe(2+). The protein operates within porphyrin-containing compound metabolism; protoheme biosynthesis; protoheme from protoporphyrin-IX: step 1/1. Its function is as follows. Catalyzes the ferrous insertion into protoporphyrin IX. In Cupriavidus taiwanensis (strain DSM 17343 / BCRC 17206 / CCUG 44338 / CIP 107171 / LMG 19424 / R1) (Ralstonia taiwanensis (strain LMG 19424)), this protein is Ferrochelatase.